A 389-amino-acid polypeptide reads, in one-letter code: Odorant receptor 85c (389 aa).

At 1–33 (MKFMKYAVFFYTSVGIEPYTIDSRSKKASLWSH) the chain is on the cytoplasmic side. Residues 34–54 (LLFWANVINLSVIVFGEILYL) traverse the membrane as a helical segment. The Extracellular portion of the chain corresponds to 55 to 66 (GVAYSDGKFIDA). Residues 67-87 (VTVLSYIGFVIVGMSKMFFIW) form a helical membrane-spanning segment. Over 88-130 (WKKTDLSDLVKELEHIYPNGKAEEEMYRLDRYLRSCSRISITY) the chain is Cytoplasmic. Residues 131 to 151 (ALLYSVLIWTFNLFSIMQFLV) traverse the membrane as a helical segment. Residues 152–199 (YEKLLKIRVVGQTLPYLMYFPWNWHENWTYYVLLFCQNFAGHTSASGQ) are Extracellular-facing. N-linked (GlcNAc...) asparagine glycosylation is present at Asn-178. The chain crosses the membrane as a helical span at residues 200 to 220 (ISTDLLLCAVATQVVMHFDYL). The Cytoplasmic portion of the chain corresponds to 221–259 (ARVVEKQVLDRDWSENSRFLAKTVQYHQRILRLMDVLND). Residues 260 to 280 (IFGIPLLLNFMVSTFVICFVG) form a helical membrane-spanning segment. The Extracellular segment spans residues 281-290 (FQMTVGVPPD). A helical membrane pass occupies residues 291-311 (IMIKLFLFLFSSLSQVYLICH). Topologically, residues 312–359 (YGQLIADASSSLSISAYKQNWQNADIRYRRALVFFIARPQRTTYLKAT) are cytoplasmic. Residues 360-380 (IFMNITRATMTDLLQVSYKFF) traverse the membrane as a helical segment. Over 381–389 (ALLRTMYIK) the chain is Extracellular.

The protein belongs to the insect chemoreceptor superfamily. Heteromeric odorant receptor channel (TC 1.A.69) family. Or49a subfamily. Interacts with Orco. Complexes exist early in the endomembrane system in olfactory sensory neurons (OSNs), coupling these complexes to the conserved ciliary trafficking pathway.

The protein resides in the cell membrane. Functionally, odorant receptor which mediates acceptance or avoidance behavior, depending on its substrates. The odorant receptor repertoire encodes a large collection of odor stimuli that vary widely in identity, intensity, and duration. May form a complex with Orco to form odorant-sensing units, providing sensitive and prolonged odorant signaling and calcium permeability. The sequence is that of Odorant receptor 85c (Or85c) from Drosophila melanogaster (Fruit fly).